Reading from the N-terminus, the 870-residue chain is MAGCRGSVCCCCRWCCCCGERESRTPEELTILGETQEEEDEILPRKDYESLDYDRCINDPYLEVLETMDNKKGRRYEAVKWMVVFAIGVCTGLVGLFVDFSVRLFTQLKFGVVQTSVEECSQKGCLALSLLELLGFNLTFVFLASLLVLIEPVAAGSGIPEIKCYLNGVKVPGIVRLRTLLCKVFGVLFSVSGGLFVGKEGPMIHSGAVVGAGLPQFQSISLRKIQFNFPYFRSDRDKRDFVSAGAAAGVAAAFGAPIGGTLFSLEEGSSFWNQGLTWKVLFCSMSATFTLNFFRSGIQFGSWGSFQLPGLLNFGEFKCSDSDKKCHLWTAMDLGFFVVMGVIGGLLGATFNCLNKRLAKYRMRNVHPKPKLVRVLESLLVSLVTTVVVFVASMVLGECRQMSSTSQTGNGSFQLQVTSEDVNSTIKAFFCPNDTYNDMATLFFNSQESAILQLFHQDGTFSPVTLALFFILYFLLACWTFGTSVPSGLFVPSLLCGAAFGRLVANVLKSYIGLGHLYSGTFALIGAAAFLGGVVRMTISLTVILIESTNEITYGLPIMVTLMVAKWTGDLFNKGIYDVHIGLRGVPLLEWETDVEMDKLRASDIMEPNLTYVYPHTRIQSLVSILRTTVHHAFPVVTENRGNEKEFMKGNQLISNNIKFKKSSILTRAGEQRKRGQSMKSYPSSELRNVCDEHVASEEPAEKEDLLQQMLERRYTPYPNLYPDQSPSEDWTMEERFRPLTFHGLVLRSQLVTLLVRGVCYSESQSSASQPRLSYAEMAEDYPRYPDIHDLDLTLLNPRMIVDVTPYMNPSPFTVSPNTHVSQVFNLFRTMGLRHLPVVNAVGEIVGIITRHNLTNEFLQARLRQHYQTL.

The Cytoplasmic portion of the chain corresponds to 1 to 80 (MAGCRGSVCC…KKGRRYEAVK (80 aa)). Transmembrane regions (helical) follow at residues 81 to 113 (WMVV…FGVV) and 128 to 150 (LSLL…LVLI). Positions 156–160 (GSGIP) match the Selectivity filter part_1 motif. S157 is a binding site for chloride. The segment at residues 159–166 (IPEIKCYL) is an intramembrane region (helical). Helical transmembrane passes span 176–194 (RLRT…VSGG) and 200–217 (EGPM…LPQF). A Selectivity filter part_2 motif is present at residues 198-202 (GKEGP). 2 intramembrane regions (helical) span residues 241–253 (FVSA…VAAA) and 257–265 (PIGGTLFSL). 3 helical membrane passes run 277 to 294 (TWKV…LNFF), 335 to 364 (GFFV…YRMR), and 371 to 392 (KLVR…VFVA). 3 N-linked (GlcNAc...) asparagine glycosylation sites follow: N410, N423, and N433. Transmembrane regions (helical) follow at residues 463–482 (PVTL…WTFG) and 488–512 (GLFV…KSYI). Positions 488–492 (GLFVP) match the Selectivity filter part_3 motif. Residue F490 participates in chloride binding. Residues 520-534 (GTFALIGAAAFLGGV) constitute an intramembrane region (helical). Residues 535–537 (VRM) constitute an intramembrane region (note=Loop between two helices). Residues 538 to 549 (TISLTVILIEST) constitute an intramembrane region (helical). The note=Loop between two helices intramembrane region spans 550–553 (NEIT). The helical transmembrane segment at 554-572 (YGLPIMVTLMVAKWTGDLF) threads the bilayer. Topologically, residues 573–870 (NKGIYDVHIG…ARLRQHYQTL (298 aa)) are cytoplasmic. Y577 serves as a coordination point for chloride. The 58-residue stretch at 606-663 (MEPNLTYVYPHTRIQSLVSILRTTVHHAFPVVTENRGNEKEFMKGNQLISNNIKFKKS) folds into the CBS 1 domain. 631-633 (HHA) is a binding site for ATP. S774 is modified (phosphoserine). In terms of domain architecture, CBS 2 spans 808-869 (MNPSPFTVSP…QARLRQHYQT (62 aa)). 850-853 (TRHN) provides a ligand contact to ATP.

It belongs to the chloride channel (TC 2.A.49) family. ClC-6/CLCN6 subfamily. Post-translationally, N-glycosylated on several asparagine residues. In terms of tissue distribution, detected in whole brain and in hippocampus neurons (at protein level). Detected in brain, trigeminus, dorsal root ganglion, spinal cord, eye, kidney, testis, skeletal muscle, thymus and pancreas. Isoform ClC-6c is expressed only in kidney.

Its subcellular location is the late endosome membrane. It catalyses the reaction 2 chloride(in) + H(+)(out) = 2 chloride(out) + H(+)(in). Its function is as follows. Voltage-gated channel mediating the exchange of chloride ions against protons. Functions as antiporter and contributes to the acidification of the late endosome lumen. The CLC channel family contains both chloride channels and proton-coupled anion transporters that exchange chloride or another anion for protons. The presence of conserved gating glutamate residues is typical for family members that function as antiporters. In Mus musculus (Mouse), this protein is H(+)/Cl(-) exchange transporter 6.